The following is a 193-amino-acid chain: NADH-quinone oxidoreductase subunit B (193 aa).

Residues Cys72, Cys73, Cys137, and Cys167 each coordinate [4Fe-4S] cluster.

This sequence belongs to the complex I 20 kDa subunit family. As to quaternary structure, NDH-1 is composed of 14 different subunits. Subunits NuoB, C, D, E, F, and G constitute the peripheral sector of the complex. [4Fe-4S] cluster is required as a cofactor.

It localises to the cell inner membrane. It catalyses the reaction a quinone + NADH + 5 H(+)(in) = a quinol + NAD(+) + 4 H(+)(out). In terms of biological role, NDH-1 shuttles electrons from NADH, via FMN and iron-sulfur (Fe-S) centers, to quinones in the respiratory chain. The immediate electron acceptor for the enzyme in this species is believed to be ubiquinone. Couples the redox reaction to proton translocation (for every two electrons transferred, four hydrogen ions are translocated across the cytoplasmic membrane), and thus conserves the redox energy in a proton gradient. The sequence is that of NADH-quinone oxidoreductase subunit B from Bartonella bacilliformis (strain ATCC 35685 / KC583 / Herrer 020/F12,63).